The primary structure comprises 392 residues: MSLAHTAAEYMLSDALLPDRRGSRLKGLRLELPLDKMVKFVTVGFPLLLMSLAFAQEFSSGSPISCFSPSNFSVRQAVFVDSSCWDSLAHYKQDEAGQYTVKSLWPHKALPYSLLALAVAMYLPVLLWQYAAVPALSSDLLFIISELDKSYNRSIRLVQHMLKIRQKSSDPHVFWDELEKARKERYFEFPLLERYLACKQRSHWLVATYLLRNALLLLFTSATYLYLGHFHLDVFFQEEFSCSIKTGLLHEETHVPELITCRLTSLSVFQIVSVSSVAIYTVLVPVIIYNLTRLCRWDKRLLSIYEMLPAFDLLSRKMLGCPINDLNVILLFLRANISELISFSWLSVLCVLKDTTTQKHNIDTVVDFMTLLAGLEPSKPKHLTQHTYDEHP.

Residues 1–39 (MSLAHTAAEYMLSDALLPDRRGSRLKGLRLELPLDKMVK) are Cytoplasmic-facing. A helical transmembrane segment spans residues 40–60 (FVTVGFPLLLMSLAFAQEFSS). Residues 61–113 (GSPISCFSPSNFSVRQAVFVDSSCWDSLAHYKQDEAGQYTVKSLWPHKALPYS) lie on the Extracellular side of the membrane. N-linked (GlcNAc...) asparagine glycosylation is present at N71. Residues 114-134 (LLALAVAMYLPVLLWQYAAVP) traverse the membrane as a helical segment. The Cytoplasmic segment spans residues 135–215 (ALSSDLLFII…VATYLLRNAL (81 aa)). A helical membrane pass occupies residues 216–236 (LLLFTSATYLYLGHFHLDVFF). At 237-267 (QEEFSCSIKTGLLHEETHVPELITCRLTSLS) the chain is on the extracellular side. Residues 268-288 (VFQIVSVSSVAIYTVLVPVII) traverse the membrane as a helical segment. Topologically, residues 289–392 (YNLTRLCRWD…LTQHTYDEHP (104 aa)) are cytoplasmic.

It belongs to the pannexin family. As to quaternary structure, homoheptameric. As to expression, skin.

It localises to the cell membrane. The protein resides in the cell junction. The protein localises to the gap junction. It is found in the endoplasmic reticulum membrane. The catalysed reaction is Ca(2+)(in) = Ca(2+)(out). It catalyses the reaction ATP(in) = ATP(out). Its function is as follows. Regulator of osteoblast differentiation by functionning as a Ca(2+) channel in the endoplasmic reticulum which regulates calmodulin (CaM) pathways. Allows ATP release into the extracellular space and activation or purinergic receptors. The chain is Pannexin-3 (Panx3) from Rattus norvegicus (Rat).